Consider the following 290-residue polypeptide: 33 kDa chaperonin (290 aa).

Disulfide bonds link Cys235/Cys237 and Cys268/Cys271.

This sequence belongs to the HSP33 family. Under oxidizing conditions two disulfide bonds are formed involving the reactive cysteines. Under reducing conditions zinc is bound to the reactive cysteines and the protein is inactive.

The protein resides in the cytoplasm. In terms of biological role, redox regulated molecular chaperone. Protects both thermally unfolding and oxidatively damaged proteins from irreversible aggregation. Plays an important role in the bacterial defense system toward oxidative stress. The sequence is that of 33 kDa chaperonin from Streptococcus pyogenes serotype M28 (strain MGAS6180).